The sequence spans 328 residues: Putative gluconeogenesis factor (328 aa).

The protein belongs to the gluconeogenesis factor family.

Its subcellular location is the cytoplasm. In terms of biological role, required for morphogenesis under gluconeogenic growth conditions. The polypeptide is Putative gluconeogenesis factor (Aquifex aeolicus (strain VF5)).